Reading from the N-terminus, the 145-residue chain is Bacilliredoxin SSP1241 (145 aa).

This sequence belongs to the bacilliredoxin family.

The protein is Bacilliredoxin SSP1241 of Staphylococcus saprophyticus subsp. saprophyticus (strain ATCC 15305 / DSM 20229 / NCIMB 8711 / NCTC 7292 / S-41).